Reading from the N-terminus, the 533-residue chain is Probable protein kinase UbiB (533 aa).

Residues 24–44 (LILELPMLPWWLRLLGATLPW) form a helical membrane-spanning segment. A Protein kinase domain is found at 126–494 (RFEREPLASA…WKGSRHDWLG (369 aa)). ATP is bound by residues 132–140 (LASASVAQV) and lysine 154. The Proton acceptor role is filled by aspartate 289. The helical transmembrane segment at 510–530 (LGQQLEAWPAWVMLAGGVFLI) threads the bilayer.

It belongs to the ABC1 family. UbiB subfamily.

The protein localises to the cell inner membrane. It participates in cofactor biosynthesis; ubiquinone biosynthesis [regulation]. Is probably a protein kinase regulator of UbiI activity which is involved in aerobic coenzyme Q (ubiquinone) biosynthesis. The sequence is that of Probable protein kinase UbiB from Pseudomonas aeruginosa (strain ATCC 15692 / DSM 22644 / CIP 104116 / JCM 14847 / LMG 12228 / 1C / PRS 101 / PAO1).